The sequence spans 868 residues: Probable mixed-linked glucan synthase 3 (868 aa).

The disordered stretch occupies residues 36-68 (ERKAAGGGGGGAKGKHWAAADKGERRAAKECGG). A compositionally biased stretch (basic and acidic residues) spans 53-68 (AAADKGERRAAKECGG). 2 consecutive transmembrane segments (helical) span residues 86 to 106 (LLHP…LFFG) and 116 to 136 (IMWF…SWLL). Residue D211 is part of the active site. The substrate site is built by D412 and D414. The active site involves D573. The next 6 membrane-spanning stretches (helical) occupy residues 649 to 669 (IYPV…MWLI), 686 to 706 (LLVI…WAGI), 717 to 737 (FFMI…VVNL), 771 to 791 (MLIP…VAIG), 810 to 830 (MGLL…LAIM), and 838 to 858 (IILV…YVAT).

It belongs to the glycosyltransferase 2 family. Plant cellulose synthase-like F subfamily.

The protein resides in the golgi apparatus membrane. Functionally, may catalyze both beta-1,3 and beta-1,4 glycosidic linkage on beta-D-glucan. Essential for (1,3;1,4)-beta-D-glucans synthesis in grasses and cereals (Poaceae). The mixed-linked glucans (which are not present in walls of dicotyledons or most other monocotyledonous plants) are particularly important constituents of the walls of the starchy endosperm and aleurone cells of cereal grains such as oats, wheat, rice and barley. They can account for up to 70% by weight of the wall. In Oryza sativa subsp. japonica (Rice), this protein is Probable mixed-linked glucan synthase 3 (CSLF3).